The chain runs to 258 residues: Thiamine thiazole synthase (258 aa).

Residues S36, 55–56 (ER), G63, I127, and 153–155 (HVD) contribute to the NAD(+) site. 2 residues coordinate Fe cation: D155 and H170. M224 provides a ligand contact to NAD(+). R234 serves as a coordination point for glycine.

Belongs to the THI4 family. Homooctamer; tetramer of dimers. Requires Fe(2+) as cofactor.

The enzyme catalyses hydrogen sulfide + glycine + NAD(+) = ADP-5-ethyl-4-methylthiazole-2-carboxylate + nicotinamide + 3 H2O + H(+). It functions in the pathway cofactor biosynthesis; thiamine diphosphate biosynthesis. Involved in the biosynthesis of the thiazole moiety of thiamine. Catalyzes the conversion of NAD and glycine to adenosine diphosphate 5-(2-hydroxyethyl)-4-methylthiazole-2-carboxylate (ADT), an adenylated thiazole intermediate, using free sulfide as a source of sulfur. The protein is Thiamine thiazole synthase of Methanothermobacter thermautotrophicus (strain ATCC 29096 / DSM 1053 / JCM 10044 / NBRC 100330 / Delta H) (Methanobacterium thermoautotrophicum).